Reading from the N-terminus, the 861-residue chain is Leucine--tRNA ligase (861 aa).

The 'HIGH' region signature appears at Pro42 to His52. The 'KMSKS' region motif lies at Lys620–Ser624. Lys623 provides a ligand contact to ATP.

The protein belongs to the class-I aminoacyl-tRNA synthetase family.

It localises to the cytoplasm. It carries out the reaction tRNA(Leu) + L-leucine + ATP = L-leucyl-tRNA(Leu) + AMP + diphosphate. The chain is Leucine--tRNA ligase from Baumannia cicadellinicola subsp. Homalodisca coagulata.